Reading from the N-terminus, the 305-residue chain is Acyl transferase (305 aa).

Catalysis depends on charge relay system residues Ser-114, Asp-211, and His-241.

It belongs to the LuxD family.

The protein operates within lipid metabolism; fatty acid reduction for biolumincescence. Its function is as follows. Acyl transferase is part of the fatty acid reductase system required for aldehyde biosynthesis; it produces fatty acids for the luminescent reaction. This is Acyl transferase (luxD) from Vibrio harveyi (Beneckea harveyi).